Reading from the N-terminus, the 153-residue chain is Superoxide dismutase [Cu-Zn] (153 aa).

Cu cation-binding residues include H45, H47, and H62. C56 and C145 are disulfide-bonded. Zn(2+)-binding residues include H62, H70, H79, and D82. H119 contributes to the Cu cation binding site.

Belongs to the Cu-Zn superoxide dismutase family. Homodimer. Cu cation is required as a cofactor. The cofactor is Zn(2+).

The protein localises to the cytoplasm. The catalysed reaction is 2 superoxide + 2 H(+) = H2O2 + O2. Its function is as follows. Destroys radicals which are normally produced within the cells and which are toxic to biological systems. The polypeptide is Superoxide dismutase [Cu-Zn] (Drosophila erecta (Fruit fly)).